We begin with the raw amino-acid sequence, 422 residues long: 26S proteasome non-ATPase regulatory subunit 11 (422 aa).

Ala2 bears the N-acetylalanine mark. Residues Ser14 and Ser23 each carry the phosphoserine modification. Positions 224–392 (DWKTAYSYFY…GVLIIFDEPP (169 aa)) constitute a PCI domain. Lys274 participates in a covalent cross-link: Glycyl lysine isopeptide (Lys-Gly) (interchain with G-Cter in SUMO2).

It belongs to the proteasome subunit S9 family. Component of the 19S proteasome regulatory particle complex. The 26S proteasome consists of a 20S core particle (CP) and two 19S regulatory subunits (RP). The regulatory particle is made of a lid composed of 9 subunits including PSMD11, a base containing 6 ATPases and few additional components. In terms of processing, phosphorylated by AMPK.

It is found in the nucleus. The protein localises to the cytoplasm. The protein resides in the cytosol. Component of the 26S proteasome, a multiprotein complex involved in the ATP-dependent degradation of ubiquitinated proteins. This complex plays a key role in the maintenance of protein homeostasis by removing misfolded or damaged proteins, which could impair cellular functions, and by removing proteins whose functions are no longer required. Therefore, the proteasome participates in numerous cellular processes, including cell cycle progression, apoptosis, or DNA damage repair. In the complex, PSMD11 is required for proteasome assembly. Plays a key role in increased proteasome activity in embryonic stem cells (ESCs): its high expression in ESCs promotes enhanced assembly of the 26S proteasome, followed by higher proteasome activity. This is 26S proteasome non-ATPase regulatory subunit 11 (PSMD11) from Bos taurus (Bovine).